Consider the following 402-residue polypeptide: Multidrug resistance protein MdtH (402 aa).

The Cytoplasmic segment spans residues 1–12 (MSRVSQARNLGK). Residues 13–33 (YFLLIDNMLVVLGFFVVFPLI) traverse the membrane as a helical segment. At 34–98 (SIRFVDQMGW…GFATMGIAHE (65 aa)) the chain is on the periplasmic side. A helical membrane pass occupies residues 99–116 (PWLLWFSCLLSGLGGTLF). Over 117–138 (DPPRSALVVKLIRPQQRGRFFS) the chain is Cytoplasmic. The helical transmembrane segment at 139-159 (LLMMQDSAGAVIGALLGSWLL) threads the bilayer. The Periplasmic portion of the chain corresponds to 160 to 164 (QYDFR). A helical transmembrane segment spans residues 165–185 (LVCATGAVLFVLCAAFNAWLL). Residues 186-213 (PAWKLSTVRTPVREGMTRVMRDKRFVTY) are Cytoplasmic-facing. A helical transmembrane segment spans residues 214–234 (VLTLAGYYMLAVQVMLMLPIM). Residues 235–243 (VNDVAGAPS) lie on the Periplasmic side of the membrane. The helical transmembrane segment at 244–264 (AVKWMYAIEACLSLTLLYPIA) threads the bilayer. Residues 265-276 (RWSEKHFRLEHR) lie on the Cytoplasmic side of the membrane. Residues 277-297 (LMAGLLIMSLSMMPVGMVSGL) traverse the membrane as a helical segment. The Periplasmic portion of the chain corresponds to 298–299 (QQ). The helical transmembrane segment at 300–320 (LFTLICLFYIGSIIAEPARET) threads the bilayer. Topologically, residues 321–339 (LSASLADARARGSYMGFSR) are cytoplasmic. A helical transmembrane segment spans residues 340–360 (LGLAIGGAIGYIGGGWLFDLG). Topologically, residues 361–367 (KSVHQPE) are periplasmic. Residues 368–388 (LPWMMLGIIGIFTFLALGWQF) traverse the membrane as a helical segment. Residues 389 to 402 (SQKRAARRLLERDA) are Cytoplasmic-facing.

Belongs to the major facilitator superfamily. DHA1 family. MdtH (TC 2.A.1.2.21) subfamily.

It localises to the cell inner membrane. Its function is as follows. Confers resistance to norfloxacin and enoxacin. This Escherichia coli O157:H7 protein is Multidrug resistance protein MdtH.